The chain runs to 421 residues: UDP-N-acetylglucosamine 1-carboxyvinyltransferase (421 aa).

A phosphoenolpyruvate-binding site is contributed by 22-23; that stretch reads KN. Arg-93 serves as a coordination point for UDP-N-acetyl-alpha-D-glucosamine. Cys-117 acts as the Proton donor in catalysis. Position 117 is a 2-(S-cysteinyl)pyruvic acid O-phosphothioketal (Cys-117). UDP-N-acetyl-alpha-D-glucosamine-binding positions include 122–126, Asp-308, and Ile-330; that span reads RPVDL.

It belongs to the EPSP synthase family. MurA subfamily.

The protein resides in the cytoplasm. It carries out the reaction phosphoenolpyruvate + UDP-N-acetyl-alpha-D-glucosamine = UDP-N-acetyl-3-O-(1-carboxyvinyl)-alpha-D-glucosamine + phosphate. It functions in the pathway cell wall biogenesis; peptidoglycan biosynthesis. Functionally, cell wall formation. Adds enolpyruvyl to UDP-N-acetylglucosamine. This is UDP-N-acetylglucosamine 1-carboxyvinyltransferase from Pseudomonas fluorescens (strain ATCC BAA-477 / NRRL B-23932 / Pf-5).